Here is a 910-residue protein sequence, read N- to C-terminus: Adhesion G-protein coupled receptor F1 (910 aa).

The first 19 residues, 1-19 (MKVGVLWLISFFTFTDGHG), serve as a signal peptide directing secretion. The Extracellular portion of the chain corresponds to 20–583 (GFLGKNDGIK…SPFVPSTIFP (564 aa)). N-linked (GlcNAc...) asparagine glycosylation is found at Asn139, Asn168, Asn205, Asn282, Asn310, Asn317, Asn329, Asn354, Asn368, Asn389, Asn410, Asn423, Asn437, Asn455, Asn512, Asn528, and Asn553. An SEA domain is found at 148–256 (ERTKIWGTFK…GSFRVFGKAQ (109 aa)). 2 disulfides stabilise this stretch: Cys257/Cys287 and Cys275/Cys299. The region spanning 437–579 (NKSQLKRGYS…SILMSPFVPS (143 aa)) is the GAIN-B domain. Cystine bridges form between Cys534–Cys561 and Cys549–Cys563. The GPS stretch occupies residues 534 to 579 (CVFWDFSHLQWNDAGCHLVNETQDIVTCQCTHLTSFSILMSPFVPS). Residues 568–576 (SFSILMSPF) form a stachel region. A helical membrane pass occupies residues 584–609 (VVKWITYVGLGISIGSLILCLIIEAL). Over 610–621 (FWKQIKKSQTSH) the chain is Cytoplasmic. A helical transmembrane segment spans residues 622 to 646 (TRRICMVNIALSLLIADVWFIVGAT). The Extracellular segment spans residues 647–658 (VDTTVNPSGVCT). A disulfide bridge links Cys657 with Cys733. Residues 659-684 (AAVFFTHFFYLSLFFWMLMLGILLAY) traverse the membrane as a helical segment. At 685–696 (RIILVFHHMAQH) the chain is on the cytoplasmic side. The helical transmembrane segment at 697-719 (LMMAVGFCLGYGCPLIISVITIA) threads the bilayer. The Extracellular segment spans residues 720–742 (VTQPSNTYKRKDVCWLNWSNGSK). Asn736 and Asn739 each carry an N-linked (GlcNAc...) asparagine glycan. The chain crosses the membrane as a helical span at residues 743–767 (PLLAFVVPALAIVAVNFVVVLLVLT). Over 768 to 784 (KLWRPTVGERLSRDDKA) the chain is Cytoplasmic. The chain crosses the membrane as a helical span at residues 785–813 (TIIRVGKSLLILTPLLGLTWGFGIGTIVD). Over 814–816 (SQN) the chain is Extracellular. A helical transmembrane segment spans residues 817-842 (LAWHVIFALLNAFQGFFILCFGILLD). Residues 843–910 (SKLRQLLFNK…IMLTQFVSNE (68 aa)) lie on the Cytoplasmic side of the membrane.

Belongs to the G-protein coupled receptor 2 family. Adhesion G-protein coupled receptor (ADGR) subfamily. Heterodimer of 2 chains generated by proteolytic processing; the large extracellular N-terminal fragment and the membrane-bound C-terminal fragment predominantly remain associated and non-covalently linked. Autoproteolytically processed at the GPS region of the GAIN-B domain; this cleavage modulates receptor activity. Post-translationally, glycosylated. Glycosylation at Asn-389 is required for secretion or folding. As to expression, mainly expressed in the kidney. Up-regulated in lung adenocarcinomas and prostate cancers.

It localises to the cell membrane. Its subcellular location is the secreted. Forms a heterodimer of 2 chains generated by proteolytic processing that remain associated through non-covalent interactions mediated by the GAIN-B domain. In the inactivated receptor, the Stachel sequence (also named stalk) is embedded in the GAIN-B domain, where it adopts a beta-strand conformation. On activation, the Stachel moves into the 7 transmembrane region and adopts a twisted hook-shaped configuration that forms contacts within the receptor, leading to coupling of a G-alpha protein, which activates signaling. The cleaved GAIN-B and N-terminal domains can then dissociate from the rest of the receptor. Functionally, adhesion G-protein coupled receptor (aGPCR) for N-docosahexaenoylethanolamine (synaptamide), an omega-3 fatty acid lipid highly enriched in the brain. Ligand binding causes a conformation change that triggers signaling via guanine nucleotide-binding proteins (G proteins) and modulates the activity of downstream effectors, such as adenylate cyclase. ADGRF1 is coupled to G(s) G proteins and mediates activation of adenylate cyclase activity. Also able to couple to G(q), G(i) and G(12)/G(13) G proteins; additional evidence is however required to confirm this result in vivo. Involved in the development of neurons and cognitive function. In liver, involved in fat accumulation. This Homo sapiens (Human) protein is Adhesion G-protein coupled receptor F1.